The sequence spans 63 residues: Small ribosomal subunit protein eS27 (63 aa).

Zn(2+) contacts are provided by cysteine 18, cysteine 21, cysteine 37, and cysteine 40. A C4-type zinc finger spans residues 18-40 (CIDCGNEQIVFSHPATKVRCLIC).

Belongs to the eukaryotic ribosomal protein eS27 family. Part of the 30S ribosomal subunit. Zn(2+) is required as a cofactor.

The sequence is that of Small ribosomal subunit protein eS27 from Pyrococcus furiosus (strain ATCC 43587 / DSM 3638 / JCM 8422 / Vc1).